Reading from the N-terminus, the 595-residue chain is Leiomodin-1 (595 aa).

Disordered regions lie at residues 1 to 322 and 467 to 568; these read MSKV…KVKN and DKQR…QEKN. Ser12 is subject to Phosphoserine. The segment covering 27–40 has biased composition (acidic residues); that stretch reads EEMEELEKELDVVD. 8 stretches are compositionally biased toward basic and acidic residues: residues 72-105, 117-127, 134-193, 201-224, 232-251, 259-289, 467-476, and 484-493; these read CEKE…EDKG, QDSDVGKEPKK, FSRD…EKTG, SRDK…KLTA, RQED…KPEV, RDSR…REKQ, DKQRQKRLQE, and SGEKKDRLEV. Residue Ser85 is modified to Phosphoserine. A Phosphoserine modification is found at Ser135. 8 tandem repeats follow at residues 165–180, 181–196, 197–212, 213–227, 228–243, 244–257, 258–273, and 274–288. Residues 165-288 are 8 X approximate tandem repeats; it reads AAVDRKEAGK…VREEGKTREK (124 aa). 2 stretches are compositionally biased toward pro residues: residues 503-513 and 527-538; these read SPKPSPQPSPK and AAPPPPPPPLAP. Residues 503–522 form a 5 X 4 AA approximate tandem repeats region; that stretch reads SPKPSPQPSPKSAPKNSPKK. Ser550 carries the phosphoserine modification. Residues 569–588 form the WH2 domain; it reads SRDQLLAAIRSSNLKQLKKV.

Detected in smooth muscle, in stomach and uterus, blood vessel wall, and in slow fibers in extraocular muscle, urinary bladder and sternothyroid muscle (at protein level).

Its subcellular location is the cytoplasm. It localises to the myofibril. It is found in the sarcomere. The protein resides in the cytoskeleton. Its function is as follows. Required for proper contractility of visceral smooth muscle cells. Mediates nucleation of actin filaments. The chain is Leiomodin-1 from Rattus norvegicus (Rat).